Consider the following 613-residue polypeptide: MSDPQTSMAATAAVSPSDYLQPAASTTQDSQPSPLALLAATCSKIGPPAVEAAVTPPAPPQPTPRKLVPIKPAPLPLSPSKNSFGILSSKGNILQIQGSQLSTSYPGGQLVFAIQNPTVVNKGTRSNTSIQYQAVPQIQASSPQTIQVQPSLTNQIQIIPGTNQAIITPSPSSHKPVPIKPAPVQKSSTTTTPAQSGANVVKLTGGGGNVTLTLPVNNLVNTSDPGAATQLLTESPPAPLSKTNKKARKKSLPAAQPPVAVAEQVETVLIETTADNIIQAGNNLLIVQSPGGGQPAVVQQVQVVPPKAEQQQVVQIPQQALRVVQAASATLPTVPQKPSQNFQIQAAEPSPTQVYIRTPSGEVQTVLVQDSPPATAATASTTTCSSPASRAAHLSGTSKKHSAAILRKERPLPKIAPAGSIISLNAAQLAAAAQAMQTININGVQVQGVPVTITNTGGQQQLTVQNVSGNNLTISGLSPTQIQLQMEQALAGETQPGEKRRRMACTCPNCKDGDKRSGEQGKKKHVCHIPDCGKTFRKTSLLRAHVRLHTGERPFVCNWFFCGKRFTRSDELQRHARTHTGDKRFECAQCQKRFMRSDHLTKHYKTHLVTKNL.

Positions 1-32 (MSDPQTSMAATAAVSPSDYLQPAASTTQDSQP) are disordered. Over residues 23–32 (AASTTQDSQP) the composition is skewed to polar residues. S78 is modified (phosphoserine). Disordered stretches follow at residues 170–197 (SPSS…AQSG) and 225–255 (PGAA…LPAA). The span at 185 to 197 (QKSSTTTTPAQSG) shows a compositional bias: polar residues. The 9aaTAD; inactive motif lies at 361 to 369 (GEVQTVLVQ). The segment covering 374–392 (ATAATASTTTCSSPASRAA) has biased composition (low complexity). The tract at residues 374–402 (ATAATASTTTCSSPASRAAHLSGTSKKHS) is disordered. 3 consecutive C2H2-type zinc fingers follow at residues 525 to 549 (HVCH…VRLH), 555 to 579 (FVCN…ARTH), and 585 to 607 (FECA…YKTH).

Belongs to the Sp1 C2H2-type zinc-finger protein family.

It is found in the nucleus. Binds to GC box promoters elements and selectively activates mRNA synthesis from genes that contain functional recognition sites. The polypeptide is Transcription factor Sp2 (SP2) (Bos taurus (Bovine)).